The primary structure comprises 297 residues: Ribosomal RNA small subunit methyltransferase A (297 aa).

The S-adenosyl-L-methionine site is built by N31, L33, G58, E79, D104, and N129.

The protein belongs to the class I-like SAM-binding methyltransferase superfamily. rRNA adenine N(6)-methyltransferase family. RsmA subfamily.

The protein resides in the cytoplasm. It catalyses the reaction adenosine(1518)/adenosine(1519) in 16S rRNA + 4 S-adenosyl-L-methionine = N(6)-dimethyladenosine(1518)/N(6)-dimethyladenosine(1519) in 16S rRNA + 4 S-adenosyl-L-homocysteine + 4 H(+). In terms of biological role, specifically dimethylates two adjacent adenosines (A1518 and A1519) in the loop of a conserved hairpin near the 3'-end of 16S rRNA in the 30S particle. May play a critical role in biogenesis of 30S subunits. In Staphylococcus aureus (strain Newman), this protein is Ribosomal RNA small subunit methyltransferase A.